The chain runs to 88 residues: Electron transfer flavoprotein regulatory factor 1 (88 aa).

It belongs to the complex I LYR family. In terms of assembly, homotetramer. Interacts with NDUFAB1. Interacts with ETFA. Interacts with ETFB.

It is found in the mitochondrion. Functionally, acts as a regulator of the electron transfer flavoprotein by promoting the removal of flavin from the ETF holoenzyme (composed of ETFA and ETFB). The chain is Electron transfer flavoprotein regulatory factor 1 from Bos taurus (Bovine).